Reading from the N-terminus, the 558-residue chain is Asparagine--tRNA ligase, cytoplasmic (558 aa).

At Ser-71 the chain carries Phosphoserine. The disordered stretch occupies residues 79–101; sequence MWHREQMKSESREKKEAEDSLRR. Basic and acidic residues predominate over residues 81 to 101; sequence HREQMKSESREKKEAEDSLRR. Residues Lys-254 and Lys-500 each carry the N6-acetyllysine modification.

The protein belongs to the class-II aminoacyl-tRNA synthetase family. Homodimer.

The protein localises to the cytoplasm. It carries out the reaction tRNA(Asn) + L-asparagine + ATP = L-asparaginyl-tRNA(Asn) + AMP + diphosphate + H(+). Its function is as follows. Catalyzes the attachment of asparagine to tRNA(Asn) in a two-step reaction: asparagine is first activated by ATP to form Asn-AMP and then transferred to the acceptor end of tRNA(Asn). In addition to its essential role in protein synthesis, acts as a signaling molecule that induced migration of CCR3-expressing cells. Has an essential role in the development of the cerebral cortex, being required for proper proliferation of radial glial cells. This chain is Asparagine--tRNA ligase, cytoplasmic, found in Macaca fascicularis (Crab-eating macaque).